We begin with the raw amino-acid sequence, 96 residues long: Venom protein 3.1 (96 aa).

The N-terminal stretch at 1–25 is a signal peptide; sequence MKFSLISVFLFAVFLSNENIFQAIA. The interval 45-84 is disordered; the sequence is EAVMSSSLTNEEESRNWPHRATRNTLEKGQKRSPAARSEI.

It belongs to the non-disulfide-bridged peptide (NDBP) superfamily. In terms of tissue distribution, expressed by the venom gland.

The protein resides in the secreted. This Lychas mucronatus (Chinese swimming scorpion) protein is Venom protein 3.1.